The primary structure comprises 65 residues: Large ribosomal subunit protein bL28 (65 aa).

The tract at residues 1-21 (MAKKDQLTLRGPLYGNNRSHS) is disordered.

The protein belongs to the bacterial ribosomal protein bL28 family.

This Mycoplasma pneumoniae (strain ATCC 29342 / M129 / Subtype 1) (Mycoplasmoides pneumoniae) protein is Large ribosomal subunit protein bL28.